The primary structure comprises 572 residues: Glypican-5 (572 aa).

Positions 1–24 (MDAQTWPVGFRCLLLLALVGSARS) are cleaved as a signal peptide. N-linked (GlcNAc...) asparagine glycosylation is found at Asn120 and Asn237. The interval 355 to 375 (SPRCSFDQSKEKHGMKTTTRN) is disordered. Ser441, Ser486, Ser495, Ser507, and Ser509 each carry an O-linked (Xyl...) (glycosaminoglycan) serine glycan. The N-linked (GlcNAc...) asparagine glycan is linked to Asn527.

The protein belongs to the glypican family. In terms of tissue distribution, in adult, primarily expressed in the brain. Also detected in fetal brain, lung and liver.

Its subcellular location is the cell membrane. It localises to the secreted. The protein resides in the extracellular space. In terms of biological role, cell surface proteoglycan that bears heparan sulfate. The protein is Glypican-5 (GPC5) of Homo sapiens (Human).